A 332-amino-acid chain; its full sequence is Small ribosomal subunit protein uS2 (332 aa).

Belongs to the universal ribosomal protein uS2 family.

This is Small ribosomal subunit protein uS2 from Nitrobacter hamburgensis (strain DSM 10229 / NCIMB 13809 / X14).